The sequence spans 75 residues: uncharacterized protein (75 aa).

Its subcellular location is the plastid. The protein localises to the chloroplast. This is an uncharacterized protein from Calycanthus floridus var. glaucus (Eastern sweetshrub).